The chain runs to 480 residues: Protein DETOXIFICATION 15 (480 aa).

12 consecutive transmembrane segments (helical) span residues 36-56 (GPLI…VMFV), 69-89 (IATS…ASAM), 118-138 (LLSV…VFFG), 143-163 (IAHL…AYGL), 180-200 (VVIC…VLVL), 208-228 (GAAV…SCYV), 255-275 (LVIP…ELLV), 294-314 (VWMI…NELG), 326-346 (RVVL…LILI), 360-380 (VVSH…LDSF), 396-416 (IGAF…GLLL), and 428-448 (WLGI…ITFF).

Belongs to the multi antimicrobial extrusion (MATE) (TC 2.A.66.1) family.

Its subcellular location is the membrane. This Arabidopsis thaliana (Mouse-ear cress) protein is Protein DETOXIFICATION 15.